We begin with the raw amino-acid sequence, 150 residues long: D-aminoacyl-tRNA deacylase (150 aa).

The Gly-cisPro motif, important for rejection of L-amino acids motif lies at 138–139 (GP).

It belongs to the DTD family. In terms of assembly, homodimer.

Its subcellular location is the cytoplasm. The catalysed reaction is glycyl-tRNA(Ala) + H2O = tRNA(Ala) + glycine + H(+). It catalyses the reaction a D-aminoacyl-tRNA + H2O = a tRNA + a D-alpha-amino acid + H(+). An aminoacyl-tRNA editing enzyme that deacylates mischarged D-aminoacyl-tRNAs. Also deacylates mischarged glycyl-tRNA(Ala), protecting cells against glycine mischarging by AlaRS. Acts via tRNA-based rather than protein-based catalysis; rejects L-amino acids rather than detecting D-amino acids in the active site. By recycling D-aminoacyl-tRNA to D-amino acids and free tRNA molecules, this enzyme counteracts the toxicity associated with the formation of D-aminoacyl-tRNA entities in vivo and helps enforce protein L-homochirality. This is D-aminoacyl-tRNA deacylase from Akkermansia muciniphila (strain ATCC BAA-835 / DSM 22959 / JCM 33894 / BCRC 81048 / CCUG 64013 / CIP 107961 / Muc).